A 480-amino-acid chain; its full sequence is Citrate synthase 1, peroxisomal (480 aa).

Residues His321, His360, and Asp416 contribute to the active site.

It belongs to the citrate synthase family. Expressed only in siliques. Not expressed in flower, stem, cauline leaf, young leaf, mature leaf and senescent leaf.

Its subcellular location is the peroxisome. The enzyme catalyses oxaloacetate + acetyl-CoA + H2O = citrate + CoA + H(+). The protein operates within carbohydrate metabolism; tricarboxylic acid cycle; isocitrate from oxaloacetate: step 1/2. The sequence is that of Citrate synthase 1, peroxisomal (CSY1) from Arabidopsis thaliana (Mouse-ear cress).